Reading from the N-terminus, the 178-residue chain is NADPH azoreductase (178 aa).

Residue 106–111 (GGGKGG) participates in NADP(+) binding.

It belongs to the azoreductase type 2 family. As to quaternary structure, monomer.

The catalysed reaction is N,N-dimethyl-1,4-phenylenediamine + aniline + 2 NADP(+) = 4-(dimethylamino)azobenzene + 2 NADPH + 2 H(+). In terms of biological role, catalyzes the reductive cleavage of azo bond in aromatic azo compounds to the corresponding amines. Requires NADPH as an electron donor for its activity. Compounds with paired naphthalene groups coupled with the azo group are good substrates, with the following preference order: Rocceline &gt; Sumifix Black B &gt; Solar Orange. The protein is NADPH azoreductase (azr) of Bacillus sp. (strain OY1-2).